The primary structure comprises 103 residues: Co-chaperonin GroES (103 aa).

It belongs to the GroES chaperonin family. As to quaternary structure, heptamer of 7 subunits arranged in a ring. Interacts with the chaperonin GroEL.

The protein localises to the cytoplasm. Together with the chaperonin GroEL, plays an essential role in assisting protein folding. The GroEL-GroES system forms a nano-cage that allows encapsulation of the non-native substrate proteins and provides a physical environment optimized to promote and accelerate protein folding. GroES binds to the apical surface of the GroEL ring, thereby capping the opening of the GroEL channel. This is Co-chaperonin GroES from Crocosphaera subtropica (strain ATCC 51142 / BH68) (Cyanothece sp. (strain ATCC 51142)).